A 420-amino-acid polypeptide reads, in one-letter code: C-methyltransferase NovU (420 aa).

It belongs to the methyltransferase superfamily.

It participates in antibiotic biosynthesis; novobiocin biosynthesis. In terms of biological role, C-methyltransferase that acts together with NovW to catalyze the formation of dTDP-4-keto-6-deoxy-5-C-methyl-L-lyxo-hexose from dTDP-4-keto-6-deoxy-D-glucose in the novobiocin biosynthesis pathway, an aminocoumarin family antibiotic that targets bacterial DNA gyrases. In Streptomyces niveus (Streptomyces spheroides), this protein is C-methyltransferase NovU (novU).